Consider the following 107-residue polypeptide: CRISPR-associated endoribonuclease Cas2 (107 aa).

Residue Asp6 coordinates Mg(2+).

Belongs to the CRISPR-associated endoribonuclease Cas2 protein family. In terms of assembly, homodimer, forms a heterotetramer with a Cas1 homodimer. Mg(2+) serves as cofactor.

Functionally, CRISPR (clustered regularly interspaced short palindromic repeat), is an adaptive immune system that provides protection against mobile genetic elements (viruses, transposable elements and conjugative plasmids). CRISPR clusters contain sequences complementary to antecedent mobile elements and target invading nucleic acids. CRISPR clusters are transcribed and processed into CRISPR RNA (crRNA). Functions as a ssRNA-specific endoribonuclease. Involved in the integration of spacer DNA into the CRISPR cassette. This Streptococcus mutans serotype c (strain NN2025) protein is CRISPR-associated endoribonuclease Cas2.